A 387-amino-acid chain; its full sequence is Putative gustatory receptor 22d (387 aa).

Residues 1–43 are Cytoplasmic-facing; that stretch reads MFRPRCGLRQKFVYVILKSILYSSWLLGIFPFKYEPKKRRLRR. The helical transmembrane segment at 44–64 threads the bilayer; that stretch reads SMWLILFGVVISSSLLILMVK. Residues 65-82 lie on the Extracellular side of the membrane; it reads QSAEDREHGIMLDVFQRN. Residues 83 to 103 form a helical membrane-spanning segment; sequence ALLYQISSLMGVVGVVSICTV. The Cytoplasmic segment spans residues 104–142; it reads HLRTLWRSKHLEEIYNGLMLLEAKYFCSNAVECPAFDGY. The helical transmembrane segment at 143–163 threads the bilayer; it reads VIQKGVVIVVGLLAPWMVHFG. Residues 164–184 lie on the Extracellular side of the membrane; sequence MPDSKLPVLNVLVVSMVKLGT. Residues 185-205 traverse the membrane as a helical segment; sequence LLLALHYHLGVVIIYRFVWLI. Residues 206–252 are Cytoplasmic-facing; sequence NRELLSLVCSLRGNHKGSSSRVRFLLKLYNKLVNLYSKLADCYDCQT. The chain crosses the membrane as a helical span at residues 253–273; the sequence is VLMMAIFLAANIIVCFYMIVY. The Extracellular segment spans residues 274 to 281; the sequence is RISLSKMS. A helical membrane pass occupies residues 282–302; that stretch reads FFVMLIMFPLAIANNFMDFWL. The Cytoplasmic segment spans residues 303 to 363; the sequence is SMKVCDLLQK…HCGLFHVNRE (61 aa). The helical transmembrane segment at 364–384 threads the bilayer; the sequence is MGFKMFVASVLYLLYLVQFDY. At 385–387 the chain is on the extracellular side; it reads MNL.

Belongs to the insect chemoreceptor superfamily. Gustatory receptor (GR) family. Gr22e subfamily. In terms of tissue distribution, expressed in neurons of the dorsal pharyngeal sense organs of larvae.

It is found in the cell membrane. In terms of biological role, probable gustatory receptor which mediates acceptance or avoidance behavior, depending on its substrates. The sequence is that of Putative gustatory receptor 22d from Drosophila melanogaster (Fruit fly).